We begin with the raw amino-acid sequence, 324 residues long: Alkanal monooxygenase beta chain (324 aa).

This sequence belongs to the bacterial luciferase oxidoreductase family. As to quaternary structure, heterodimer of an alpha and a beta chain.

It carries out the reaction a long-chain fatty aldehyde + FMNH2 + O2 = a long-chain fatty acid + hnu + FMN + H2O + 2 H(+). In terms of biological role, light-emitting reaction in luminous bacteria. The specific role of the beta subunit is unknown, but it is absolutely required for bioluminescence activity. The protein is Alkanal monooxygenase beta chain (luxB) of Photorhabdus laumondii subsp. laumondii (strain DSM 15139 / CIP 105565 / TT01) (Photorhabdus luminescens subsp. laumondii).